A 273-amino-acid polypeptide reads, in one-letter code: MGKLLRKPLNERIAPGITFVQDINQANSPLSYVGFRLIEMEKGAIYQEELTDLECCIVALTGKITVSEGDNIFAEIGTRANVFEKIPTDSVFISGGRTFQVKADTEKARVALCYSQANRDLPTTLIKASDNSIEQRGKYQNKRLVHNILPDVSEVASSLLVVEVYTDGGNFSSYPPHKHDRDNLPAESLLEESYYHEINPEQGFIFQRVYTDDRTLDETMAVEHQNAVIVPEGYHPVGVPDGYDSYYLNVMAGPKRVWKFHNDPDHEWILERD.

Belongs to the isomerase IolB family.

The catalysed reaction is 5-deoxy-D-glucuronate = 5-dehydro-2-deoxy-D-gluconate. It functions in the pathway polyol metabolism; myo-inositol degradation into acetyl-CoA; acetyl-CoA from myo-inositol: step 4/7. Functionally, involved in the isomerization of 5-deoxy-glucuronate (5DG) to 5-dehydro-2-deoxy-D-gluconate (DKG or 2-deoxy-5-keto-D-gluconate). This Listeria monocytogenes serotype 4b (strain CLIP80459) protein is 5-deoxy-glucuronate isomerase.